We begin with the raw amino-acid sequence, 210 residues long: Proteasome subunit beta (210 aa).

The propeptide at 1 to 9 (MIHDKVFKG) is removed in mature form; by autocatalysis. The Nucleophile role is filled by Thr10.

The protein belongs to the peptidase T1B family. As to quaternary structure, the 20S proteasome core is composed of 14 alpha and 14 beta subunits that assemble into four stacked heptameric rings, resulting in a barrel-shaped structure. The two inner rings, each composed of seven catalytic beta subunits, are sandwiched by two outer rings, each composed of seven alpha subunits. The catalytic chamber with the active sites is on the inside of the barrel. Has a gated structure, the ends of the cylinder being occluded by the N-termini of the alpha-subunits. Is capped at one or both ends by the proteasome regulatory ATPase, PAN.

It is found in the cytoplasm. The enzyme catalyses Cleavage of peptide bonds with very broad specificity.. With respect to regulation, the formation of the proteasomal ATPase PAN-20S proteasome complex, via the docking of the C-termini of PAN into the intersubunit pockets in the alpha-rings, triggers opening of the gate for substrate entry. Interconversion between the open-gate and close-gate conformations leads to a dynamic regulation of the 20S proteasome proteolysis activity. Component of the proteasome core, a large protease complex with broad specificity involved in protein degradation. In Ferroglobus placidus (strain DSM 10642 / AEDII12DO), this protein is Proteasome subunit beta.